Consider the following 197-residue polypeptide: A-type ATP synthase subunit E (197 aa).

The protein belongs to the V-ATPase E subunit family. In terms of assembly, has multiple subunits with at least A(3), B(3), C, D, E, F, H, I and proteolipid K(x).

The protein localises to the cell membrane. Functionally, component of the A-type ATP synthase that produces ATP from ADP in the presence of a proton gradient across the membrane. The sequence is that of A-type ATP synthase subunit E from Thermococcus gammatolerans (strain DSM 15229 / JCM 11827 / EJ3).